A 37-amino-acid polypeptide reads, in one-letter code: Large ribosomal subunit protein bL36c (37 aa).

Belongs to the bacterial ribosomal protein bL36 family.

It localises to the plastid. This is Large ribosomal subunit protein bL36c from Cuscuta exaltata (Tall dodder).